Consider the following 789-residue polypeptide: Molybdenum cofactor sulfurase (789 aa).

Lys251 carries the N6-(pyridoxal phosphate)lysine modification. Cys422 is an active-site residue. The MOSC domain maps to 628–789; the sequence is GDQVAQWLDQ…LICGETLEVD (162 aa). Position 741 is a phosphoserine (Ser741).

This sequence belongs to the class-V pyridoxal-phosphate-dependent aminotransferase family. MOCOS subfamily. It depends on pyridoxal 5'-phosphate as a cofactor.

It catalyses the reaction Mo-molybdopterin + L-cysteine + AH2 = thio-Mo-molybdopterin + L-alanine + A + H2O. It functions in the pathway cofactor biosynthesis; molybdopterin biosynthesis. Sulfurates the molybdenum cofactor. Sulfation of molybdenum is essential for xanthine dehydrogenase (XDH) and aldehyde oxidase (ADO) enzymes in which molybdenum cofactor is liganded by 1 oxygen and 1 sulfur atom in active form. The chain is Molybdenum cofactor sulfurase from Drosophila willistoni (Fruit fly).